The sequence spans 101 residues: DNA-binding protein Fis (101 aa).

Residues 77-96 (QTRAANMLGINRGTLRKKLK) constitute a DNA-binding region (H-T-H motif).

It belongs to the transcriptional regulatory Fis family. In terms of assembly, homodimer.

Activates ribosomal RNA transcription. Plays a direct role in upstream activation of rRNA promoters. The protein is DNA-binding protein Fis of Shewanella denitrificans (strain OS217 / ATCC BAA-1090 / DSM 15013).